Here is a 134-residue protein sequence, read N- to C-terminus: MADTGEVQFMKPFISEKSSKSLEIPLGFNEYFPAPFPITVDLLDYSGRSWTVRMKKRGEKVFLTVGWENFVKDNNLEDGKYLQFIYDRDRTFYVIIYGHNMCSEYRDFPQVAVEVDDYENGEEEEDGDDQDKHQ.

A DNA-binding region (TF-B3) is located at residues 7–100 (VQFMKPFISE…TFYVIIYGHN (94 aa)).

Its subcellular location is the nucleus. The protein is B3 domain-containing protein At1g16640 of Arabidopsis thaliana (Mouse-ear cress).